Consider the following 375-residue polypeptide: Platelet-derived growth factor receptor-like protein (375 aa).

A signal peptide spans 1-21; sequence MKFWLLLGLLLLHEALEDVAG. The interval 20–63 is disordered; the sequence is AGQHSPKNKRPKEQGENRIKPTNKKAKPKIPKVKDRDSTDSTAK. Residues 40–50 are compositionally biased toward basic residues; that stretch reads PTNKKAKPKIP. An Ig-like C2-type 1 domain is found at 47–159; the sequence is PKIPKVKDRD…GYICRRDEAK (113 aa). Cys96 and Cys143 are joined by a disulfide. An N-linked (GlcNAc...) asparagine glycan is attached at Asn219. One can recognise an Ig-like C2-type 2 domain in the interval 272–375; the sequence is PSTTILASSN…TTVATTVEFS (104 aa). Cys293 and Cys357 are joined by a disulfide.

As to quaternary structure, forms a complex composed of PDGFRL, TNK2 and GRB2.

Its subcellular location is the secreted. The polypeptide is Platelet-derived growth factor receptor-like protein (Pdgfrl) (Mus musculus (Mouse)).